Reading from the N-terminus, the 212-residue chain is Thymidylate kinase (212 aa).

An ATP-binding site is contributed by 11-18 (GPDGAGKS).

Belongs to the thymidylate kinase family.

It carries out the reaction dTMP + ATP = dTDP + ADP. Its function is as follows. Phosphorylation of dTMP to form dTDP in both de novo and salvage pathways of dTTP synthesis. The polypeptide is Thymidylate kinase (Streptococcus gordonii (strain Challis / ATCC 35105 / BCRC 15272 / CH1 / DL1 / V288)).